The following is a 137-amino-acid chain: Acidic phospholipase A2 1 (137 aa).

An N-terminal signal peptide occupies residues 1–11 (LVAVCVSLLGA). Residues 12–19 (ANIPPQPL) constitute a propeptide that is removed on maturation. 7 disulfides stabilise this stretch: cysteine 30–cysteine 89, cysteine 44–cysteine 136, cysteine 46–cysteine 62, cysteine 61–cysteine 117, cysteine 68–cysteine 110, cysteine 78–cysteine 103, and cysteine 96–cysteine 108. Tyrosine 45, glycine 47, and glycine 49 together coordinate Ca(2+). 2 residues coordinate tridecanoate: glycine 49 and histidine 65. The active site involves histidine 65. Aspartate 66 is a binding site for Ca(2+). Aspartate 111 is an active-site residue.

Monomer. It depends on Ca(2+) as a cofactor. As to expression, expressed by the venom gland.

It localises to the secreted. It carries out the reaction a 1,2-diacyl-sn-glycero-3-phosphocholine + H2O = a 1-acyl-sn-glycero-3-phosphocholine + a fatty acid + H(+). Functionally, snake venom phospholipase A2 (PLA2) that shows anticoagulant and neurotoxic activities. PLA2 catalyzes the calcium-dependent hydrolysis of the 2-acyl groups in 3-sn-phosphoglycerides. The sequence is that of Acidic phospholipase A2 1 from Bungarus caeruleus (Indian krait).